Consider the following 142-residue polypeptide: Ornithine decarboxylase antizyme (142 aa).

Low complexity predominate over residues Met-1–Met-19. Residues Met-1–Pro-34 are disordered.

The protein belongs to the ODC antizyme family. As to quaternary structure, interacts with ODC1 and thereby sterically blocks ODC homodimerization.

Ornithine decarboxylase (ODC) antizyme protein that negatively regulates ODC activity and intracellular polyamine biosynthesis and uptake in response to increased intracellular polyamine levels. Binds to ODC monomers, inhibiting the assembly of the functional ODC homodimer, and targets the monomers for ubiquitin-independent proteolytic destruction by the 26S proteasome. In Pristionchus pacificus (Parasitic nematode), this protein is Ornithine decarboxylase antizyme.